A 324-amino-acid chain; its full sequence is Phthalate 4,5-dioxygenase oxygenase reductase subunit (324 aa).

An FAD-binding FR-type domain is found at 9-111 (DGFTGLKVIA…ATPQNEFELI (103 aa)). 115 to 229 (RQFIFVAGGI…PGSIHFESFG (115 aa)) contributes to the NAD(+) binding site. Positions 241–324 (FSVTLGRSGI…ARNDVLVLDL (84 aa)) constitute a 2Fe-2S ferredoxin-type domain. Cys275, Cys280, Cys283, and Cys311 together coordinate [2Fe-2S] cluster.

Belongs to the PDR/VanB family. As to quaternary structure, this dioxygenase system consists of two proteins: phthalate oxygenase and phthalate oxygenase reductase. It depends on FMN as a cofactor.

It carries out the reaction phthalate + NADH + O2 + H(+) = cis-4,5-dihydroxycyclohexa-2,6-diene-1,2-dicarboxylate + NAD(+). It participates in xenobiotic degradation; phthalate degradation; 3,4-dihydroxybenzoate from phthalate: step 1/3. This chain is Phthalate 4,5-dioxygenase oxygenase reductase subunit (pht2), found in Pseudomonas putida (Arthrobacter siderocapsulatus).